We begin with the raw amino-acid sequence, 273 residues long: Glutamate 5-kinase (273 aa).

Lys15 contacts ATP. Residues Ser55, Asp142, and Asn158 each contribute to the substrate site. ATP-binding positions include 178–179 (SD) and 220–226 (TGGMLSK).

Belongs to the glutamate 5-kinase family.

The protein localises to the cytoplasm. It carries out the reaction L-glutamate + ATP = L-glutamyl 5-phosphate + ADP. It participates in amino-acid biosynthesis; L-proline biosynthesis; L-glutamate 5-semialdehyde from L-glutamate: step 1/2. Catalyzes the transfer of a phosphate group to glutamate to form L-glutamate 5-phosphate. The protein is Glutamate 5-kinase of Streptococcus pyogenes serotype M3 (strain ATCC BAA-595 / MGAS315).